The primary structure comprises 539 residues: Chaperonin GroEL (539 aa).

ATP-binding positions include 29–32 (TIGP), 86–90 (DGTTT), Gly413, 476–478 (NAA), and Asp492.

This sequence belongs to the chaperonin (HSP60) family. Forms a cylinder of 14 subunits composed of two heptameric rings stacked back-to-back. Interacts with the co-chaperonin GroES.

It is found in the cytoplasm. It catalyses the reaction ATP + H2O + a folded polypeptide = ADP + phosphate + an unfolded polypeptide.. Together with its co-chaperonin GroES, plays an essential role in assisting protein folding. The GroEL-GroES system forms a nano-cage that allows encapsulation of the non-native substrate proteins and provides a physical environment optimized to promote and accelerate protein folding. This chain is Chaperonin GroEL, found in Leuconostoc mesenteroides subsp. mesenteroides (strain ATCC 8293 / DSM 20343 / BCRC 11652 / CCM 1803 / JCM 6124 / NCDO 523 / NBRC 100496 / NCIMB 8023 / NCTC 12954 / NRRL B-1118 / 37Y).